The sequence spans 111 residues: Carboxysome shell protein CcmK1 (111 aa).

The BMC domain maps to 4 to 90 (AVGMIETLGF…PHENLEYVLP (87 aa)).

Belongs to the bacterial microcompartments protein family. CcmK subfamily. Homohexamer. Interacts with full-length CcmM. Forms mixed heterohexamers of all possible stoichiometries with CcmK2, which might form dodecamers. Only very weak interactions with CcmK3 and CcmK4 were seen. Interacts with CcmN and CcmO in the carboxysome.

It is found in the carboxysome. Its function is as follows. One of the shell proteins of the carboxysome, a polyhedral inclusion where RuBisCO (ribulose bisphosphate carboxylase, rbcL-rbcS) is sequestered. Assembles into hexamers which make sheets that form the facets of the polyhedral carboxysome. The hexamer central pore probably regulates metabolite flux. Probably the major shell protein of the carboxysome, a polyhedral inclusion where RuBisCO (ribulose bisphosphate carboxylase, rbcL-rbcS) is sequestered. The central pore probably regulates metabolite flux. Hexamers make sheets that form the facets of the carboxysome. The chain is Carboxysome shell protein CcmK1 from Synechocystis sp. (strain ATCC 27184 / PCC 6803 / Kazusa).